We begin with the raw amino-acid sequence, 303 residues long: D-alanine--D-alanine ligase (303 aa).

Positions 99–293 (TYRFLKGTVE…FEELVEIILK (195 aa)) constitute an ATP-grasp domain. ATP is bound at residue 125-176 (GYPCVVKPRREGSSIGVFVCESDEEFQHALKEDLPRYGSVIVQKYIPGREMT). 3 residues coordinate Mg(2+): aspartate 248, glutamate 260, and asparagine 262.

It belongs to the D-alanine--D-alanine ligase family. Mg(2+) serves as cofactor. Requires Mn(2+) as cofactor.

It is found in the cytoplasm. It carries out the reaction 2 D-alanine + ATP = D-alanyl-D-alanine + ADP + phosphate + H(+). The protein operates within cell wall biogenesis; peptidoglycan biosynthesis. Its function is as follows. Cell wall formation. The chain is D-alanine--D-alanine ligase from Thermotoga maritima (strain ATCC 43589 / DSM 3109 / JCM 10099 / NBRC 100826 / MSB8).